The following is a 490-amino-acid chain: tRNA-guanine(15) transglycosylase (490 aa).

The Nucleophile role is filled by Asp92. Asp127 and Ala195 together coordinate substrate. Residues Cys278, Cys280, and Cys283 each contribute to the Zn(2+) site.

The protein belongs to the archaeosine tRNA-ribosyltransferase family. The cofactor is Zn(2+).

The enzyme catalyses guanosine(15) in tRNA + 7-cyano-7-deazaguanine = 7-cyano-7-carbaguanosine(15) in tRNA + guanine. Its pathway is tRNA modification; archaeosine-tRNA biosynthesis. In terms of biological role, exchanges the guanine residue with 7-cyano-7-deazaguanine (preQ0) at position 15 in the dihydrouridine loop (D-loop) of archaeal tRNAs. The sequence is that of tRNA-guanine(15) transglycosylase from Haloarcula marismortui (strain ATCC 43049 / DSM 3752 / JCM 8966 / VKM B-1809) (Halobacterium marismortui).